The following is a 66-amino-acid chain: Large ribosomal subunit protein bL33c (66 aa).

Belongs to the bacterial ribosomal protein bL33 family.

Its subcellular location is the plastid. The protein resides in the chloroplast. The polypeptide is Large ribosomal subunit protein bL33c (Oryza nivara (Indian wild rice)).